We begin with the raw amino-acid sequence, 296 residues long: 4-hydroxybenzoate octaprenyltransferase (296 aa).

The next 8 helical transmembrane spans lie at 28-48, 52-72, 102-122, 145-167, 174-196, 219-239, 241-261, and 275-295; these read PIGI…AGNG, LANV…GCCI, ALTL…CTNS, TYYP…FTAA, GAWL…YAMV, SIIL…GSRF, LGGW…WEYW, and FLHN…DYAL.

It belongs to the UbiA prenyltransferase family. Mg(2+) is required as a cofactor.

The protein localises to the cell inner membrane. The enzyme catalyses all-trans-octaprenyl diphosphate + 4-hydroxybenzoate = 4-hydroxy-3-(all-trans-octaprenyl)benzoate + diphosphate. It functions in the pathway cofactor biosynthesis; ubiquinone biosynthesis. In terms of biological role, catalyzes the prenylation of para-hydroxybenzoate (PHB) with an all-trans polyprenyl group. Mediates the second step in the final reaction sequence of ubiquinone-8 (UQ-8) biosynthesis, which is the condensation of the polyisoprenoid side chain with PHB, generating the first membrane-bound Q intermediate 3-octaprenyl-4-hydroxybenzoate. This is 4-hydroxybenzoate octaprenyltransferase from Pseudomonas putida (strain ATCC 700007 / DSM 6899 / JCM 31910 / BCRC 17059 / LMG 24140 / F1).